Consider the following 261-residue polypeptide: Chanoclavine-I dehydrogenase easD (261 aa).

An N-terminal signal peptide occupies residues 1-20 (MPSMTSKVFAITGGASGIGA). I18 is a binding site for NADP(+). N43 is a glycosylation site (N-linked (GlcNAc...) asparagine). D66, R132, Y166, K170, and T201 together coordinate NADP(+). Residue Y166 is the Proton donor of the active site. K170 serves as the catalytic Lowers pKa of active site Tyr.

It belongs to the short-chain dehydrogenases/reductases (SDR) family. In terms of assembly, homotetramer.

It carries out the reaction chanoclavine-I + NAD(+) = chanoclavine-I aldehyde + NADH + H(+). It functions in the pathway alkaloid biosynthesis; ergot alkaloid biosynthesis. In terms of biological role, chanoclavine-I dehydrogenase; part of the gene cluster that mediates the biosynthesis of fungal ergot alkaloid. DmaW catalyzes the first step of ergot alkaloid biosynthesis by condensing dimethylallyl diphosphate (DMAP) and tryptophan to form 4-dimethylallyl-L-tryptophan. The second step is catalyzed by the methyltransferase easF that methylates 4-dimethylallyl-L-tryptophan in the presence of S-adenosyl-L-methionine, resulting in the formation of 4-dimethylallyl-L-abrine. The catalase easC and the FAD-dependent oxidoreductase easE then transform 4-dimethylallyl-L-abrine to chanoclavine-I which is further oxidized by easD in the presence of NAD(+), resulting in the formation of chanoclavine-I aldehyde. Agroclavine dehydrogenase easG then mediates the conversion of chanoclavine-I aldehyde to agroclavine via a non-enzymatic adduct reaction: the substrate is an iminium intermediate that is formed spontaneously from chanoclavine-I aldehyde in the presence of glutathione. The presence of easA is not required to complete this reaction. Further conversion of agroclavine to paspalic acid is a two-step process involving oxidation of agroclavine to elymoclavine and of elymoclavine to paspalic acid, the second step being performed by the elymoclavine oxidase cloA. Paspalic acid is then further converted to D-lysergic acid. Ergopeptines are assembled from D-lysergic acid and three different amino acids by the D-lysergyl-peptide-synthetases composed each of a monomudular and a trimodular nonribosomal peptide synthetase subunit. LpsB and lpsC encode the monomodular subunits responsible for D-lysergic acid activation and incorporation into the ergopeptine backbone. LpsA1 and A2 subunits encode the trimodular nonribosomal peptide synthetase assembling the tripeptide portion of ergopeptines. LpsA1 is responsible for formation of the major ergopeptine, ergotamine, and lpsA2 for alpha-ergocryptine, the minor ergopeptine of the total alkaloid mixture elaborated by C.purpurea. D-lysergyl-tripeptides are assembled by the nonribosomal peptide synthetases and released as N-(D-lysergyl-aminoacyl)-lactams. Cyclolization of the D-lysergyl-tripeptides is performed by the Fe(2+)/2-ketoglutarate-dependent dioxygenase easH which introduces a hydroxyl group into N-(D-lysergyl-aminoacyl)-lactam at alpha-C of the aminoacyl residue followed by spontaneous condensation with the terminal lactam carbonyl group. This is Chanoclavine-I dehydrogenase easD from Claviceps purpurea (Ergot fungus).